The chain runs to 420 residues: Reticulon-4 receptor-like 2 (420 aa).

Residues 1–30 (MLPGLRRLLQGPASACLLLTLLALPSVTPS) form the signal peptide. 2 cysteine pairs are disulfide-bonded: cysteine 31/cysteine 37 and cysteine 35/cysteine 46. An LRRNT domain is found at 31-60 (CPMLCTCYSSPPTVSCQANNFSSVPLSLPP). Residue asparagine 50 is glycosylated (N-linked (GlcNAc...) asparagine). LRR repeat units follow at residues 61-82 (STQRLFLQNNLIRSLRPGTFGP), 83-104 (NLLTLWLFSNNLSTIHPGTFRH), 107-129 (ALEELDLGDNRHLRSLEPDTFQG), 132-153 (RLQSLHLYRCQLSSLPGNIFRG), 156-177 (SLQYLYLQENSLLHLQDDLFAD), 180-201 (NLSHLFLHGNRLRLLTEHVFRG), 204-225 (SLDRLLLHGNRLQGVHRAAFHG), and 228-249 (RLTILYLFNNSLASLPGEALAD). An N-linked (GlcNAc...) asparagine glycan is attached at asparagine 93. Asparagine 236 is a glycosylation site (N-linked (GlcNAc...) asparagine). In terms of domain architecture, LRRCT spans 261–312 (NPWACDCRARPLWAWFQRARVSSSDVTCATPPERQGRDLRALRDSDFQACPP). Intrachain disulfides connect cysteine 265–cysteine 288 and cysteine 267–cysteine 310. Residues 286-399 (VTCATPPERQ…CQAPADSRGP (114 aa)) are disordered. Over residues 294-306 (RQGRDLRALRDSD) the composition is skewed to basic and acidic residues. Residues 315–327 (PTRPGSRARGNSS) are important for interaction with MAG. The segment covering 351–360 (LPAEDSRGRQ) has biased composition (basic and acidic residues). Glycine 398 carries GPI-anchor amidated glycine lipidation. A propeptide spans 399 to 420 (PALSAGLRTPLLCLLPLALHHL) (removed in mature form).

It belongs to the Nogo receptor family. Interaction with MAG is controversial, and may be indirect. Interacts with MAG. Does not interact with OMG and RTN4. Undergoes zinc metalloproteinase-mediated ectodomain shedding in neuroblastoma cells; is released both as a full-length ectodomain and an N-terminal fragment containing the leucine-rich repeat (LRR) region of the protein. In terms of processing, N-glycosylated. As to expression, detected in brain. Detected in hippocampus neurons (at protein level).

The protein localises to the cell membrane. Its subcellular location is the membrane raft. The protein resides in the cell projection. It is found in the dendrite. It localises to the axon. The protein localises to the perikaryon. Its function is as follows. Cell surface receptor that plays a functionally redundant role in the inhibition of neurite outgrowth mediated by MAG. Plays a functionally redundant role in postnatal brain development. Contributes to normal axon migration across the brain midline and normal formation of the corpus callosum. Does not seem to play a significant role in regulating axon regeneration in the adult central nervous system. Protects motoneurons against apoptosis; protection against apoptosis is probably mediated by MAG. Like other family members, plays a role in restricting the number dendritic spines and the number of synapses that are formed during brain development. Signaling mediates activation of Rho and downstream reorganization of the actin cytoskeleton. In Mus musculus (Mouse), this protein is Reticulon-4 receptor-like 2.